Consider the following 204-residue polypeptide: Small ribosomal subunit protein uS7 (204 aa).

M1 is modified (N-acetylmethionine). N-acetylthreonine; in 40S ribosomal protein S5, N-terminally processed is present on T2. At T14 the chain carries Phosphothreonine. K47 carries the N6-acetyllysine; alternate modification. K47 is covalently cross-linked (Glycyl lysine isopeptide (Lys-Gly) (interchain with G-Cter in SUMO2); alternate). S142 carries the post-translational modification Phosphoserine.

Belongs to the universal ribosomal protein uS7 family. As to quaternary structure, component of the small ribosomal subunit. Part of the small subunit (SSU) processome, composed of more than 70 proteins and the RNA chaperone small nucleolar RNA (snoRNA) U3.

The protein localises to the cytoplasm. The protein resides in the nucleus. It is found in the nucleolus. Its function is as follows. Component of the small ribosomal subunit. The ribosome is a large ribonucleoprotein complex responsible for the synthesis of proteins in the cell. Part of the small subunit (SSU) processome, first precursor of the small eukaryotic ribosomal subunit. During the assembly of the SSU processome in the nucleolus, many ribosome biogenesis factors, an RNA chaperone and ribosomal proteins associate with the nascent pre-rRNA and work in concert to generate RNA folding, modifications, rearrangements and cleavage as well as targeted degradation of pre-ribosomal RNA by the RNA exosome. The chain is Small ribosomal subunit protein uS7 (Rps5) from Rattus norvegicus (Rat).